Consider the following 121-residue polypeptide: Large ribosomal subunit protein bL19 (121 aa).

The protein belongs to the bacterial ribosomal protein bL19 family.

In terms of biological role, this protein is located at the 30S-50S ribosomal subunit interface and may play a role in the structure and function of the aminoacyl-tRNA binding site. The sequence is that of Large ribosomal subunit protein bL19 from Mesomycoplasma hyopneumoniae (strain 232) (Mycoplasma hyopneumoniae).